The sequence spans 420 residues: F420-non-reducing hydrogenase vhu subunit A (420 aa).

Ni(2+) contacts are provided by Cys-61 and Cys-64.

This sequence belongs to the [NiFe]/[NiFeSe] hydrogenase large subunit family. As to quaternary structure, the F420-non-reducing hydrogenase vhu is composed of four subunits; VhuA, VhuD, VhuG and VhuU. Requires Ni(2+) as cofactor.

In Methanococcus voltae, this protein is F420-non-reducing hydrogenase vhu subunit A (vhuA).